We begin with the raw amino-acid sequence, 548 residues long: Membrane protein insertase YidC (548 aa).

The chain crosses the membrane as a helical span at residues 6–26 (NLLVIALLFVSFMIWQAWEQD). Residues 28–55 (NPQPQAQQTTQTTTTAAGSAADQGVPAS) are disordered. A compositionally biased stretch (low complexity) spans 30–50 (QPQAQQTTQTTTTAAGSAADQ). Helical transmembrane passes span 350 to 370 (FVGN…GIMY), 420 to 440 (LGGC…YYML), 458 to 478 (LSAQ…MFFI), and 499 to 519 (PVIF…YYIV).

This sequence belongs to the OXA1/ALB3/YidC family. Type 1 subfamily. In terms of assembly, interacts with the Sec translocase complex via SecD. Specifically interacts with transmembrane segments of nascent integral membrane proteins during membrane integration.

It localises to the cell inner membrane. Required for the insertion and/or proper folding and/or complex formation of integral membrane proteins into the membrane. Involved in integration of membrane proteins that insert both dependently and independently of the Sec translocase complex, as well as at least some lipoproteins. Aids folding of multispanning membrane proteins. The protein is Membrane protein insertase YidC of Shigella boydii serotype 18 (strain CDC 3083-94 / BS512).